The following is a 28-amino-acid chain: Cytochrome c oxidase subunit 5B, mitochondrial (28 aa).

It belongs to the cytochrome c oxidase subunit 5B family. In terms of assembly, component of the cytochrome c oxidase (complex IV, CIV), a multisubunit enzyme composed of a catalytic core of 3 subunits and several supernumerary subunits. The complex exists as a monomer or a dimer and forms supercomplexes (SCs) in the inner mitochondrial membrane with ubiquinol-cytochrome c oxidoreductase (cytochrome b-c1 complex, complex III, CIII).

It is found in the mitochondrion inner membrane. Its pathway is energy metabolism; oxidative phosphorylation. In terms of biological role, component of the cytochrome c oxidase, the last enzyme in the mitochondrial electron transport chain which drives oxidative phosphorylation. The respiratory chain contains 3 multisubunit complexes succinate dehydrogenase (complex II, CII), ubiquinol-cytochrome c oxidoreductase (cytochrome b-c1 complex, complex III, CIII) and cytochrome c oxidase (complex IV, CIV), that cooperate to transfer electrons derived from NADH and succinate to molecular oxygen, creating an electrochemical gradient over the inner membrane that drives transmembrane transport and the ATP synthase. Cytochrome c oxidase is the component of the respiratory chain that catalyzes the reduction of oxygen to water. Electrons originating from reduced cytochrome c in the intermembrane space (IMS) are transferred via the dinuclear copper A center (CU(A)) of subunit 2 and heme A of subunit 1 to the active site in subunit 1, a binuclear center (BNC) formed by heme A3 and copper B (CU(B)). The BNC reduces molecular oxygen to 2 water molecules using 4 electrons from cytochrome c in the IMS and 4 protons from the mitochondrial matrix. The protein is Cytochrome c oxidase subunit 5B, mitochondrial of Solanum tuberosum (Potato).